The chain runs to 324 residues: Phospho-N-acetylmuramoyl-pentapeptide-transferase (324 aa).

9 consecutive transmembrane segments (helical) span residues 13-33, 57-77, 85-105, 121-141, 143-163, 179-199, 201-221, 238-260, and 303-323; these read VLSA…IFIP, GTPT…MLII, GMIV…DDIL, MILL…NIGT, IIIP…PLVV, IDGL…IVGF, TGHY…LGFL, LALG…IIIV, and VKLV…GFIA.

It belongs to the glycosyltransferase 4 family. MraY subfamily. The cofactor is Mg(2+).

Its subcellular location is the cell membrane. It catalyses the reaction UDP-N-acetyl-alpha-D-muramoyl-L-alanyl-gamma-D-glutamyl-meso-2,6-diaminopimeloyl-D-alanyl-D-alanine + di-trans,octa-cis-undecaprenyl phosphate = di-trans,octa-cis-undecaprenyl diphospho-N-acetyl-alpha-D-muramoyl-L-alanyl-D-glutamyl-meso-2,6-diaminopimeloyl-D-alanyl-D-alanine + UMP. It participates in cell wall biogenesis; peptidoglycan biosynthesis. In terms of biological role, catalyzes the initial step of the lipid cycle reactions in the biosynthesis of the cell wall peptidoglycan: transfers peptidoglycan precursor phospho-MurNAc-pentapeptide from UDP-MurNAc-pentapeptide onto the lipid carrier undecaprenyl phosphate, yielding undecaprenyl-pyrophosphoryl-MurNAc-pentapeptide, known as lipid I. In Clostridium botulinum (strain Eklund 17B / Type B), this protein is Phospho-N-acetylmuramoyl-pentapeptide-transferase.